The chain runs to 232 residues: uncharacterized protein (232 aa).

The segment at 1-71 (MSNPTIEGDE…KENERIKNDD (71 aa)) is disordered. Over residues 25 to 38 (DDLDDLDDILDDLD) the composition is skewed to acidic residues. The span at 44 to 71 (KNEEKKNIDEHKQTGNTSKENERIKNDD) shows a compositional bias: basic and acidic residues.

This is an uncharacterized protein from Schizosaccharomyces pombe (strain 972 / ATCC 24843) (Fission yeast).